A 935-amino-acid polypeptide reads, in one-letter code: Progesterone receptor (935 aa).

Residues 1 to 50 (MTELKAKGPRAPHVAGSPSSPKVGSPLPCSQAAGPFPGSQTSDTLPEASA) form a disordered region. Positions 1–164 (MTELKAKGPR…PATQRVLSPL (164 aa)) are AF3; mediates transcriptional activation. The segment at 1–568 (MTELKAKGPR…YSFESLPQKI (568 aa)) is modulating, Pro-Rich. The residue at position 20 (serine 20) is a Phosphoserine. The LXXL motif 1 signature appears at 55–59 (LDGLL). Residues 62–159 (RICQGQDPTD…DPPAAPATQR (98 aa)) are disordered. The residue at position 81 (serine 81) is a Phosphoserine. The LXXL motif 2 signature appears at 115 to 119 (LDTLW). 2 positions are modified to phosphoserine: serine 130 and serine 162. Residues 165–305 (MSRSGGKAGD…LATTVTDFIH (141 aa)) are mediates transcriptional transrepression. The Nuclear localization signal signature appears at 183–187 (KVLPR). Positions 185-252 (LPRGLSPSRQ…ALGGAAAGGG (68 aa)) are disordered. Serine 190 bears the Phosphoserine mark. The span at 191–203 (PSRQLLLPTSGSP) shows a compositional bias: polar residues. Position 213 is a phosphoserine (serine 213). Residues 220–231 (EVEEEDGSESED) show a composition bias toward acidic residues. The segment covering 232-246 (SAGPLLKGKPRALGG) has biased composition (low complexity). Serine 294 is modified (phosphoserine; by MAPK1). The disordered stretch occupies residues 331–365 (GGAGAASAFAPPRSSPSASSTPVPGGDFPDCAYAP). The span at 335 to 356 (AASAFAPPRSSPSASSTPVPGG) shows a compositional bias: low complexity. Serine 345 carries the phosphoserine; by MAPK modification. Lysine 388 is covalently cross-linked (Glycyl lysine isopeptide (Lys-Gly) (interchain with G-Cter in SUMO); alternate). Lysine 388 is covalently cross-linked (Glycyl lysine isopeptide (Lys-Gly) (interchain with G-Cter in ubiquitin); alternate). The residue at position 400 (serine 400) is a Phosphoserine; by CDK2. Residues 415-452 (PDFPLGPPPSLPPRAPPPRPGEAAVTAAPASASVSSAS) form a disordered region. Positions 418–434 (PLGPPPSLPPRAPPPRP) are enriched in pro residues. Over residues 435-452 (GEAAVTAAPASASVSSAS) the composition is skewed to low complexity. Residues 456 to 548 (STLECILYKA…VYPPYLNYLR (93 aa)) are AF1; mediates transcriptional activation. Residue lysine 533 forms a Glycyl lysine isopeptide (Lys-Gly) (interchain with G-Cter in SUMO) linkage. 2 consecutive NR C4-type zinc fingers follow at residues 569-589 (CLIC…CGSC) and 605-629 (CAGR…LRKC). A DNA-binding region (nuclear receptor) is located at residues 569 to 641 (CLICGDEASG…AGMVLGGRKF (73 aa)). Residue serine 678 is modified to Phosphoserine. One can recognise an NR LBD domain in the interval 681-915 (QDIQLIPPLI…EFPEMMSEVI (235 aa)). The segment at 689 to 935 (LINLLLSIEP…MVKPLLFHKK (247 aa)) is AF2; mediates transcriptional activation.

It belongs to the nuclear hormone receptor family. In terms of assembly, interacts with SMARD1 and UNC45A. Interacts with CUEDC2; the interaction promotes ubiquitination, decreases sumoylation, and represses transcriptional activity. Interacts with PIAS3; the interaction promotes sumoylation of PR in a hormone-dependent manner, inhibits DNA-binding, and alters nuclear export. Interacts with SP1; the interaction requires ligand-induced phosphorylation on Ser-344 by ERK1/2-MAPK. Interacts with PRMT2. Interacts with NCOA2 and NCOA1. Interacts with KLF9. Interacts with GTF2B. Phosphorylated on multiple serine sites. Several of these sites are hormone-dependent. Phosphorylation on Ser-294 is highly hormone-dependent and modulates ubiquitination and sumoylation on Lys-388. Phosphorylation on Ser-345 requires induction by hormone. Basal phosphorylation on Ser-81, Ser-162, Ser-190 and Ser-400 is increased in response to progesterone and can be phosphorylated in vitro by the CDK2-A1 complex. Increased levels of phosphorylation on Ser-400 also in the presence of EGF, heregulin, IGF, PMA and FBS. Phosphorylation at this site by CDK2 is ligand-independent, and increases nuclear translocation and transcriptional activity. Phosphorylation at Ser-162 and Ser-294, but not at Ser-190, is impaired during the G(2)/M phase of the cell cycle. Phosphorylation on Ser-345 by ERK1/2 MAPK is required for interaction with SP1. Post-translationally, sumoylation is hormone-dependent and represses transcriptional activity. Sumoylation on all three sites is enhanced by PIAS3. Desumoylated by SENP1. Sumoylation on Lys-388, the main site of sumoylation, is repressed by ubiquitination on the same site, and modulated by phosphorylation at Ser-294. In terms of processing, ubiquitination is hormone-dependent and represses sumoylation on the same site. Promoted by MAPK-mediated phosphorylation on Ser-294. Palmitoylated by ZDHHC7 and ZDHHC21. Palmitoylation is required for plasma membrane targeting and for rapid intracellular signaling via ERK and AKT kinases and cAMP generation.

It is found in the nucleus. Its subcellular location is the cytoplasm. Functionally, the steroid hormones and their receptors are involved in the regulation of eukaryotic gene expression and affect cellular proliferation and differentiation in target tissues. Transcriptional activator of several progesteron-dependent promoters in a variety of cell types. Involved in activation of SRC-dependent MAPK signaling on hormone stimulation. This chain is Progesterone receptor (PGR), found in Pithecia irrorata (Gray monk saki).